Consider the following 347-residue polypeptide: DNA-directed RNA polymerase subunit alpha (347 aa).

The segment at 1 to 230 (MFKGFQKPKR…DHMTIFINFE (230 aa)) is alpha N-terminal domain (alpha-NTD). Residues 247 to 347 (MNEVLNRSVE…EDDGQDQIGE (101 aa)) form an alpha C-terminal domain (alpha-CTD) region. A disordered region spans residues 320-347 (GRLVAPPPSAGGGPDFGPEDDGQDQIGE). Residues 336 to 347 (GPEDDGQDQIGE) show a composition bias toward acidic residues.

It belongs to the RNA polymerase alpha chain family. Homodimer. The RNAP catalytic core consists of 2 alpha, 1 beta, 1 beta' and 1 omega subunit. When a sigma factor is associated with the core the holoenzyme is formed, which can initiate transcription.

It catalyses the reaction RNA(n) + a ribonucleoside 5'-triphosphate = RNA(n+1) + diphosphate. Its function is as follows. DNA-dependent RNA polymerase catalyzes the transcription of DNA into RNA using the four ribonucleoside triphosphates as substrates. In Solibacter usitatus (strain Ellin6076), this protein is DNA-directed RNA polymerase subunit alpha.